The primary structure comprises 315 residues: Ribosomal RNA small subunit methyltransferase H (315 aa).

Residues 35–37 (GGH), aspartate 55, phenylalanine 79, aspartate 101, and glutamine 108 each bind S-adenosyl-L-methionine.

Belongs to the methyltransferase superfamily. RsmH family.

It localises to the cytoplasm. The catalysed reaction is cytidine(1402) in 16S rRNA + S-adenosyl-L-methionine = N(4)-methylcytidine(1402) in 16S rRNA + S-adenosyl-L-homocysteine + H(+). Functionally, specifically methylates the N4 position of cytidine in position 1402 (C1402) of 16S rRNA. This chain is Ribosomal RNA small subunit methyltransferase H, found in Sodalis glossinidius (strain morsitans).